Here is a 302-residue protein sequence, read N- to C-terminus: MTTTMEYHNPVLLHPTVDGLDIKPDGIYVDVTFGGGGHSKEILRRLGPNGKLFAFDQDEDALANALPDERFTLINENFRFIKRFLRFHGIKAVDGILADLGVSSHQFDVPERGFSTRFDAELDMRMSQKNDLNAYRVVNEYEEQDLRRVFFDYGELKNAPVLARTIVEARHHRPIKTTDELKEVLKKYLPEKVRNKILAQIYQAIRIEVNQEMDVLKEFIEQSLEILKPGGRFSVISYHSLEDRLVKRFIKNGMFEGEPERDFYGNFSVPFKTIGKLIVPDDEEIKINNRARSAKLRIAEKI.

S-adenosyl-L-methionine contacts are provided by residues 36 to 38 (GGH), aspartate 56, phenylalanine 84, aspartate 99, and glutamine 106.

This sequence belongs to the methyltransferase superfamily. RsmH family.

The protein resides in the cytoplasm. It catalyses the reaction cytidine(1402) in 16S rRNA + S-adenosyl-L-methionine = N(4)-methylcytidine(1402) in 16S rRNA + S-adenosyl-L-homocysteine + H(+). Functionally, specifically methylates the N4 position of cytidine in position 1402 (C1402) of 16S rRNA. The protein is Ribosomal RNA small subunit methyltransferase H of Flavobacterium johnsoniae (strain ATCC 17061 / DSM 2064 / JCM 8514 / BCRC 14874 / CCUG 350202 / NBRC 14942 / NCIMB 11054 / UW101) (Cytophaga johnsonae).